Here is a 730-residue protein sequence, read N- to C-terminus: UvrABC system protein C (730 aa).

The GIY-YIG domain occupies 16-95 (AAPGVYKFRD…IKEFDPRFNV (80 aa)). Residues 208 to 243 (DKLVKDLEKRMQQASEDLDFETAARLRDDIGALRKA) enclose the UVR domain. The tract at residues 678–730 (ARALPAAVGDDELDKESESSVTSADAPSAESGSGDEGSESRELSMPTTGPSAQ) is disordered.

It belongs to the UvrC family. As to quaternary structure, interacts with UvrB in an incision complex.

It localises to the cytoplasm. Its function is as follows. The UvrABC repair system catalyzes the recognition and processing of DNA lesions. UvrC both incises the 5' and 3' sides of the lesion. The N-terminal half is responsible for the 3' incision and the C-terminal half is responsible for the 5' incision. The sequence is that of UvrABC system protein C from Rhodococcus erythropolis (strain PR4 / NBRC 100887).